The following is a 100-amino-acid chain: Small ribosomal subunit protein uS14c (100 aa).

It belongs to the universal ribosomal protein uS14 family. Part of the 30S ribosomal subunit.

It is found in the plastid. Its subcellular location is the chloroplast. Binds 16S rRNA, required for the assembly of 30S particles. The chain is Small ribosomal subunit protein uS14c from Adiantum capillus-veneris (Maidenhair fern).